Reading from the N-terminus, the 417-residue chain is MAEIRNYTMNFGPQHPAAHGVLRLVMELDGEVIRRADPHIGLLHRATEKLAENKTYVQSVPYMDRLDYVSMMVNEHAYVMAIEKLLQIEVPIRAQYIRVMFDEITRILNHLLWLGAHALDVGAMTVFLYAFREREDLMDCYEAVSGARLHAAYYRPGGVYRDLPDNMPQYQPSAIHDEKATRARNENRQGSLLDFIEDFTRRFPGYIDDYEALLTDNRIWKQRLVDIGVVSPDRAKALGFTGPMLRGSGVEWDLRKKQPYEVYDQVDFDIPVGANGDCYDRYLVRIEEMRQSNHIIKQCVEWLRKNPGPVITDNHKVAPPSRLAMKQNMEEMIHHFKLFTEGMHVPRGEAYAAVEHPKGEFGIYIVSDGANKPYRLKIRAPGFAHLAALDEMTKGHMIADLVAIIGTQDIVFGEIDR.

The protein belongs to the complex I 49 kDa subunit family. As to quaternary structure, NDH-1 is composed of 14 different subunits. Subunits NuoB, C, D, E, F, and G constitute the peripheral sector of the complex.

The protein localises to the cell inner membrane. The enzyme catalyses a quinone + NADH + 5 H(+)(in) = a quinol + NAD(+) + 4 H(+)(out). In terms of biological role, NDH-1 shuttles electrons from NADH, via FMN and iron-sulfur (Fe-S) centers, to quinones in the respiratory chain. The immediate electron acceptor for the enzyme in this species is believed to be ubiquinone. Couples the redox reaction to proton translocation (for every two electrons transferred, four hydrogen ions are translocated across the cytoplasmic membrane), and thus conserves the redox energy in a proton gradient. This chain is NADH-quinone oxidoreductase subunit D, found in Nitrosomonas europaea (strain ATCC 19718 / CIP 103999 / KCTC 2705 / NBRC 14298).